Here is a 422-residue protein sequence, read N- to C-terminus: MSEILSRVWTVSHRVEIWLLILVAYLLQRNVNSGHLPTKAADPEAFMNVSEIIKHKGYPSEEYEVATEDGYILSVNRIPRGQTRLKKEGSRPVVLLQHGLLGDASNWISNLPNNSLGFILADAGFDVWMGNSRGNTWSRKHKTLSIDQDEFWAFSYDEMARFDLPAVINFILQKTGQKKVYYVGYSQGTTMGFIAFSTMPELAHKIKMYFALAPIATVKYARSPGTKFLLLPDMMIKVLFGRQEFLYQTRFFRQLFIYLCGQMILDQICSNIILLLGGFNTNNMNMSRANVYVAHTPAGTSVQNILHWSQAVNSGELRAFDWGSETKNQEKCNQPTPIRYKVRDMMVPTAMWTGGQDWLSNPDDVKTLLSEVTNLIYHKNIPEWAHVDFIWGLDAPQRVYNEIIHLMKQEPNLPQGTCRVKL.

Positions 1-33 (MSEILSRVWTVSHRVEIWLLILVAYLLQRNVNS) are cleaved as a signal peptide. N48 carries an N-linked (GlcNAc...) asparagine glycan. The 301-residue stretch at 92 to 392 (PVVLLQHGLL…EWAHVDFIWG (301 aa)) folds into the AB hydrolase-1 domain. Residue S186 is the Nucleophile of the active site. C260 and C269 are oxidised to a cystine. Active-site charge relay system residues include D357 and H386.

The protein belongs to the AB hydrolase superfamily. Lipase family.

It localises to the secreted. Its function is as follows. Plays a highly specific role in the last step of keratinocyte differentiation. May have an essential function in lipid metabolism of the most differentiated epidermal layers. This Mus musculus (Mouse) protein is Lipase member M (Lipm).